Reading from the N-terminus, the 416-residue chain is Squamosa promoter-binding-like protein 8 (416 aa).

The disordered stretch occupies residues 11 to 53 (SSCDDFGYNATPPPPPSLLPIMDQDGGGGSIQRDHHHHHNHQQ). The SBP-type zinc finger occupies 182–260 (PPRCQAEGCK…ADHNRRRRKS (79 aa)). Cysteine 185, cysteine 190, cysteine 207, histidine 210, cysteine 227, cysteine 230, histidine 234, and cysteine 246 together coordinate Zn(2+). Positions 243-259 (KKSCRKRLADHNRRRRK) match the Bipartite nuclear localization signal motif. The segment at 250–299 (LADHNRRRRKSKPSDGEHSGEKRRAQANKSAATKDKAGSSSKNAGIGDGF) is disordered. Positions 261 to 273 (KPSDGEHSGEKRR) are enriched in basic and acidic residues.

Expressed in stems, leaf sheaths, and young panicles.

It localises to the nucleus. Functionally, probable transcription factor that plays an important role in building the laminar joint between leaf blade and leaf sheath boundary, thereby controlling ligule and auricle development. This Oryza sativa subsp. indica (Rice) protein is Squamosa promoter-binding-like protein 8 (SPL8).